Here is a 243-residue protein sequence, read N- to C-terminus: TIGR03089 family protein (243 aa).

The protein belongs to the TIGR03089 family.

The polypeptide is TIGR03089 family protein (Mycobacterium tuberculosis (strain ATCC 25618 / H37Rv)).